The chain runs to 373 residues: Protein-glutamate methylesterase/protein-glutamine glutaminase 1 (373 aa).

The Response regulatory domain occupies 16-133 (RVVVVDDSAL…ASGLTELSDQ (118 aa)). At Asp67 the chain carries 4-aspartylphosphate. The region spanning 175–367 (RVSTEKLICI…PALIAKLSSA (193 aa)) is the CheB-type methylesterase domain. Catalysis depends on residues Ser187, His213, and Asp309.

Belongs to the CheB family. Phosphorylated by CheA. Phosphorylation of the N-terminal regulatory domain activates the methylesterase activity.

It localises to the cytoplasm. It catalyses the reaction [protein]-L-glutamate 5-O-methyl ester + H2O = L-glutamyl-[protein] + methanol + H(+). The catalysed reaction is L-glutaminyl-[protein] + H2O = L-glutamyl-[protein] + NH4(+). Involved in chemotaxis. Part of a chemotaxis signal transduction system that modulates chemotaxis in response to various stimuli. Catalyzes the demethylation of specific methylglutamate residues introduced into the chemoreceptors (methyl-accepting chemotaxis proteins or MCP) by CheR. Also mediates the irreversible deamidation of specific glutamine residues to glutamic acid. The protein is Protein-glutamate methylesterase/protein-glutamine glutaminase 1 of Albidiferax ferrireducens (strain ATCC BAA-621 / DSM 15236 / T118) (Rhodoferax ferrireducens).